Consider the following 136-residue polypeptide: Methylglyoxal synthase (136 aa).

In terms of domain architecture, MGS-like spans 1 to 136 (MKIALIAHDR…REVVREENEA (136 aa)). Residues His8, Lys12, 34–37 (TGTT), and 54–55 (SG) each bind substrate. Catalysis depends on Asp60, which acts as the Proton donor/acceptor. His87 contacts substrate.

It belongs to the methylglyoxal synthase family.

The enzyme catalyses dihydroxyacetone phosphate = methylglyoxal + phosphate. Functionally, catalyzes the formation of methylglyoxal from dihydroxyacetone phosphate. This chain is Methylglyoxal synthase, found in Brevibacillus brevis (strain 47 / JCM 6285 / NBRC 100599).